Consider the following 161-residue polypeptide: ATP synthase subunit b 1 (161 aa).

A helical transmembrane segment spans residues 3-23; the sequence is FDASFFALVGLVLFFVLIAYL.

Belongs to the ATPase B chain family. F-type ATPases have 2 components, F(1) - the catalytic core - and F(0) - the membrane proton channel. F(1) has five subunits: alpha(3), beta(3), gamma(1), delta(1), epsilon(1). F(0) has three main subunits: a(1), b(2) and c(10-14). The alpha and beta chains form an alternating ring which encloses part of the gamma chain. F(1) is attached to F(0) by a central stalk formed by the gamma and epsilon chains, while a peripheral stalk is formed by the delta and b chains.

It is found in the cell inner membrane. F(1)F(0) ATP synthase produces ATP from ADP in the presence of a proton or sodium gradient. F-type ATPases consist of two structural domains, F(1) containing the extramembraneous catalytic core and F(0) containing the membrane proton channel, linked together by a central stalk and a peripheral stalk. During catalysis, ATP synthesis in the catalytic domain of F(1) is coupled via a rotary mechanism of the central stalk subunits to proton translocation. Functionally, component of the F(0) channel, it forms part of the peripheral stalk, linking F(1) to F(0). This is ATP synthase subunit b 1 from Agrobacterium fabrum (strain C58 / ATCC 33970) (Agrobacterium tumefaciens (strain C58)).